Here is a 637-residue protein sequence, read N- to C-terminus: tRNA uridine 5-carboxymethylaminomethyl modification enzyme MnmG (637 aa).

18–23 (GAGHAG) serves as a coordination point for FAD. Residue 282–296 (GPRYCPSIEDKIVRF) coordinates NAD(+).

This sequence belongs to the MnmG family. As to quaternary structure, homodimer. Heterotetramer of two MnmE and two MnmG subunits. FAD serves as cofactor.

It is found in the cytoplasm. In terms of biological role, NAD-binding protein involved in the addition of a carboxymethylaminomethyl (cmnm) group at the wobble position (U34) of certain tRNAs, forming tRNA-cmnm(5)s(2)U34. The sequence is that of tRNA uridine 5-carboxymethylaminomethyl modification enzyme MnmG from Pediococcus pentosaceus (strain ATCC 25745 / CCUG 21536 / LMG 10740 / 183-1w).